The primary structure comprises 377 residues: Nitric oxide reductase FlRd-NAD(+) reductase (377 aa).

This sequence belongs to the FAD-dependent oxidoreductase family. FAD is required as a cofactor.

The protein resides in the cytoplasm. It catalyses the reaction 2 reduced [nitric oxide reductase rubredoxin domain] + NAD(+) + H(+) = 2 oxidized [nitric oxide reductase rubredoxin domain] + NADH. The protein operates within nitrogen metabolism; nitric oxide reduction. One of at least two accessory proteins for anaerobic nitric oxide (NO) reductase. Reduces the rubredoxin moiety of NO reductase. The polypeptide is Nitric oxide reductase FlRd-NAD(+) reductase (Citrobacter koseri (strain ATCC BAA-895 / CDC 4225-83 / SGSC4696)).